Here is a 401-residue protein sequence, read N- to C-terminus: Argininosuccinate synthase (401 aa).

Residues 10–18 and Ala-38 contribute to the ATP site; that span reads AYSGGVDTS. Tyr-89 is an L-citrulline binding site. An ATP-binding site is contributed by Gly-119. Positions 121, 125, and 126 each coordinate L-aspartate. Asn-125 is an L-citrulline binding site. L-citrulline-binding residues include Arg-129, Ser-177, Ser-186, Glu-262, and Tyr-274.

The protein belongs to the argininosuccinate synthase family. Type 1 subfamily. In terms of assembly, homotetramer.

It is found in the cytoplasm. The catalysed reaction is L-citrulline + L-aspartate + ATP = 2-(N(omega)-L-arginino)succinate + AMP + diphosphate + H(+). It participates in amino-acid biosynthesis; L-arginine biosynthesis; L-arginine from L-ornithine and carbamoyl phosphate: step 2/3. The chain is Argininosuccinate synthase from Prochlorococcus marinus (strain MIT 9313).